The chain runs to 211 residues: Troponin I, cardiac muscle (211 aa).

N-acetylalanine is present on Ala-1. Positions 1–43 (ADESRDAAGEARPAPAPVRRRSSANYRAYATEPHAKSKKKISA) are disordered. Ser-4 carries the phosphoserine modification. Ser-22 bears the Phosphoserine; by PHK, PKA and PKD/PRKD1 mark. Ser-23 carries the phosphoserine; by PKA and PKD/PRKD1 modification. At Tyr-26 the chain carries Phosphotyrosine. A Phosphothreonine; by STK4/MST1 modification is found at Thr-31. Residues 32–79 (EPHAKSKKKISASRKLQLKTLMLQIAKQELEREAEERRGEKGRALSTR) form an involved in binding TNC region. Phosphoserine; by PKC/PRKCE occurs at positions 42 and 44. Position 51 is a phosphothreonine; by STK4/MST1 (Thr-51). Ser-77 carries the post-translational modification Phosphoserine. At Thr-78 the chain carries Phosphothreonine. Phosphothreonine; by STK4/MST1 is present on residues Thr-129 and Thr-143. The tract at residues 129 to 150 (TQKIFDLRGKFKRPTLRLRVRI) is involved in binding TNC and actin. Ser-151 is subject to Phosphoserine; by PAK3. Thr-182 is subject to Phosphothreonine. A Phosphoserine modification is found at Ser-200.

This sequence belongs to the troponin I family. Interacts with TRIM63. Binds to actin and tropomyosin. Interacts with STK4/MST1. In terms of processing, phosphorylated at Ser-22 and Ser-23 by PRKD1; phosphorylation reduces myofilament calcium sensitivity. Phosphorylated preferentially at Thr-31. Phosphorylation by STK4/MST1 alters its binding affinity to TNNC1 (cardiac Tn-C) and TNNT2 (cardiac Tn-T). Phosphorylated at Ser-42 and Ser-44 by PRKCE; phosphorylation increases myocardium contractile dysfunction. Ser-22 is one of three sites in the region of residues 1-48 that are phosphorylated by phosphorylase kinase.

Its function is as follows. Troponin I is the inhibitory subunit of troponin, the thin filament regulatory complex which confers calcium-sensitivity to striated muscle actomyosin ATPase activity. This Oryctolagus cuniculus (Rabbit) protein is Troponin I, cardiac muscle (TNNI3).